We begin with the raw amino-acid sequence, 335 residues long: UPF0353 protein Mflv_3659 (335 aa).

A run of 2 helical transmembrane segments spans residues 18-38 (WFFL…VVQL) and 67-87 (LPAV…AGPT). In terms of domain architecture, VWFA spans 98–294 (VVMLVIDVSQ…EQLKQVFTNL (197 aa)). The helical transmembrane segment at 309–329 (VGWLRLGAGVLALAALGALLI) threads the bilayer.

It belongs to the UPF0353 family.

The protein resides in the cell membrane. This chain is UPF0353 protein Mflv_3659, found in Mycolicibacterium gilvum (strain PYR-GCK) (Mycobacterium gilvum (strain PYR-GCK)).